Here is a 745-residue protein sequence, read N- to C-terminus: 1,4-alpha-glucan branching enzyme GlgB (745 aa).

D416 (nucleophile) is an active-site residue. Residue E469 is the Proton donor of the active site.

It belongs to the glycosyl hydrolase 13 family. GlgB subfamily. Monomer.

It catalyses the reaction Transfers a segment of a (1-&gt;4)-alpha-D-glucan chain to a primary hydroxy group in a similar glucan chain.. It functions in the pathway glycan biosynthesis; glycogen biosynthesis. Its function is as follows. Catalyzes the formation of the alpha-1,6-glucosidic linkages in glycogen by scission of a 1,4-alpha-linked oligosaccharide from growing alpha-1,4-glucan chains and the subsequent attachment of the oligosaccharide to the alpha-1,6 position. The chain is 1,4-alpha-glucan branching enzyme GlgB from Shewanella sp. (strain MR-7).